We begin with the raw amino-acid sequence, 275 residues long: Small ribosomal subunit protein uS2 (275 aa).

The disordered stretch occupies residues 226-275 (AAAPNSASVREEEFSAEAGDEGKGRRAPAKKATEKKADAPAAAPEAPAAE). A compositionally biased stretch (low complexity) spans 264 to 275 (APAAAPEAPAAE).

This sequence belongs to the universal ribosomal protein uS2 family.

This Xanthomonas campestris pv. campestris (strain 8004) protein is Small ribosomal subunit protein uS2.